The primary structure comprises 145 residues: Ribosomal RNA large subunit methyltransferase H (145 aa).

Residues L64, G93, and 112-117 (LSPLTF) each bind S-adenosyl-L-methionine.

It belongs to the RNA methyltransferase RlmH family. Homodimer.

The protein resides in the cytoplasm. It carries out the reaction pseudouridine(1915) in 23S rRNA + S-adenosyl-L-methionine = N(3)-methylpseudouridine(1915) in 23S rRNA + S-adenosyl-L-homocysteine + H(+). Functionally, specifically methylates the pseudouridine at position 1915 (m3Psi1915) in 23S rRNA. This Prochlorococcus marinus (strain NATL2A) protein is Ribosomal RNA large subunit methyltransferase H.